The chain runs to 376 residues: Erythronate-4-phosphate dehydrogenase (376 aa).

Serine 45 and threonine 67 together coordinate substrate. NAD(+) contacts are provided by residues 127–128, aspartate 147, and threonine 176; that span reads QV. Residue arginine 209 is part of the active site. Aspartate 233 contacts NAD(+). Residue glutamate 238 is part of the active site. Histidine 255 serves as the catalytic Proton donor. Glycine 258 contributes to the NAD(+) binding site. A substrate-binding site is contributed by tyrosine 259.

It belongs to the D-isomer specific 2-hydroxyacid dehydrogenase family. PdxB subfamily. As to quaternary structure, homodimer.

It localises to the cytoplasm. It carries out the reaction 4-phospho-D-erythronate + NAD(+) = (R)-3-hydroxy-2-oxo-4-phosphooxybutanoate + NADH + H(+). It functions in the pathway cofactor biosynthesis; pyridoxine 5'-phosphate biosynthesis; pyridoxine 5'-phosphate from D-erythrose 4-phosphate: step 2/5. In terms of biological role, catalyzes the oxidation of erythronate-4-phosphate to 3-hydroxy-2-oxo-4-phosphonooxybutanoate. This is Erythronate-4-phosphate dehydrogenase from Aliivibrio fischeri (strain ATCC 700601 / ES114) (Vibrio fischeri).